A 1404-amino-acid chain; its full sequence is DNA-directed RNA polymerase subunit beta' (1404 aa).

Residues C60, C62, C75, and C78 each contribute to the Zn(2+) site. Mg(2+) is bound by residues D449, D451, and D453. Zn(2+) contacts are provided by C778, C852, C859, and C862. The disordered stretch occupies residues 1381–1404 (DRPLEEEEEEEIPQSIADDSDGDE). A compositionally biased stretch (acidic residues) spans 1384–1404 (LEEEEEEEIPQSIADDSDGDE).

The protein belongs to the RNA polymerase beta' chain family. The RNAP catalytic core consists of 2 alpha, 1 beta, 1 beta' and 1 omega subunit. When a sigma factor is associated with the core the holoenzyme is formed, which can initiate transcription. Requires Mg(2+) as cofactor. The cofactor is Zn(2+).

It catalyses the reaction RNA(n) + a ribonucleoside 5'-triphosphate = RNA(n+1) + diphosphate. Its function is as follows. DNA-dependent RNA polymerase catalyzes the transcription of DNA into RNA using the four ribonucleoside triphosphates as substrates. In Leptospira borgpetersenii serovar Hardjo-bovis (strain JB197), this protein is DNA-directed RNA polymerase subunit beta'.